Consider the following 204-residue polypeptide: Chaperone protein TorD (204 aa).

Belongs to the TorD/DmsD family. TorD subfamily.

Its subcellular location is the cytoplasm. Functionally, involved in the biogenesis of TorA. Acts on TorA before the insertion of the molybdenum cofactor and, as a result, probably favors a conformation of the apoenzyme that is competent for acquiring the cofactor. The chain is Chaperone protein TorD from Shewanella baltica (strain OS223).